The chain runs to 72 residues: MSNSMTKLTELREMSDEQLDATAKEAAETLFRLRFQSQSERLNTPSEIKKNRKTIARVKTIQTERQLAQPQA.

This sequence belongs to the universal ribosomal protein uL29 family.

The protein is Large ribosomal subunit protein uL29 of Rhodopirellula baltica (strain DSM 10527 / NCIMB 13988 / SH1).